Reading from the N-terminus, the 129-residue chain is Follitropin subunit beta (129 aa).

An N-terminal signal peptide occupies residues 1 to 20 (MKSVQFCFLFCCWRAICCRS). 6 disulfide bridges follow: Cys21–Cys69, Cys35–Cys84, Cys38–Cys122, Cys46–Cys100, Cys50–Cys102, and Cys105–Cys112. 2 N-linked (GlcNAc...) asparagine glycosylation sites follow: Asn25 and Asn42.

The protein belongs to the glycoprotein hormones subunit beta family. As to quaternary structure, heterodimer. The active follitropin is a heterodimer composed of an alpha chain/CGA shared with other hormones and a unique beta chain/FSHB shown here.

The protein localises to the secreted. Together with the alpha chain CGA constitutes follitropin, the follicle-stimulating hormone, and provides its biological specificity to the hormone heterodimer. Binds FSHR, a G protein-coupled receptor, on target cells to activate downstream signaling pathways. Follitropin is involved in follicle development and spermatogenesis in reproductive organs. The polypeptide is Follitropin subunit beta (FSHB) (Bos taurus (Bovine)).